Reading from the N-terminus, the 200-residue chain is RPW8-like protein 4 (200 aa).

In terms of domain architecture, RPW8 spans 1-157 (MPIAELAVIK…MKAIQVDQWT (157 aa)). Residues 7-29 (AVIKTVGGPLIAAALGVGAQVIY) traverse the membrane as a helical segment. The stretch at 70–127 (REVHESLTRLLEDAKSIIEKYWKLRWSRHVCRKYRYIKKLESIELELVRVAREIQVHQ) forms a coiled coil.

This sequence belongs to the plant RPW8 protein family.

Its subcellular location is the membrane. Functionally, probable disease resistance (R) protein. The chain is RPW8-like protein 4 (HR4) from Arabidopsis thaliana (Mouse-ear cress).